Consider the following 587-residue polypeptide: Beta-(1--&gt;2)glucan export ATP-binding/permease protein NdvA (587 aa).

The region spanning 21–301 (VSLVVIANIV…MRQFATQIFE (281 aa)) is the ABC transmembrane type-1 domain. A run of 6 helical transmembrane segments spans residues 23-43 (LVVIANIVLATITIAEPILFG), 57-77 (PILFMWAAFAVFNTVAFVLVS), 126-146 (LFGLWLEFMRNHLSTVIALAL), 158-178 (LSAVLIVLGIAYWLIGRVVMS), 248-268 (MASTIAMMVVLIIGTMLVQSG), and 272-292 (IGDVIAFIGFANLLIARLDLM). The ABC transporter domain maps to 335–569 (IEFRDVSFGF…NGRFAALLRA (235 aa)). Residue 368–375 (GPTGAGKT) participates in ATP binding.

The protein belongs to the ABC transporter superfamily. Beta-(1--&gt;2)glucan exporter (TC 3.A.1.108.1) family. As to quaternary structure, homodimer.

The protein localises to the cell inner membrane. It carries out the reaction [(1-&gt;2)-beta-D-glucosyl](n)(in) + ATP + H2O = [(1-&gt;2)-beta-D-glucosyl](n)(out) + ADP + phosphate + H(+). Functionally, involved in beta-(1--&gt;2)glucan export. Transmembrane domains (TMD) form a pore in the inner membrane and the ATP-binding domain (NBD) is responsible for energy generation. This chain is Beta-(1--&gt;2)glucan export ATP-binding/permease protein NdvA, found in Rhizobium etli (strain ATCC 51251 / DSM 11541 / JCM 21823 / NBRC 15573 / CFN 42).